The primary structure comprises 586 residues: Phosphomethylpyrimidine synthase (586 aa).

Residues 1-33 are disordered; the sequence is MKQSVSAEQIELKSSLPGSKKVYVDGPREGMKV. Basic and acidic residues predominate over residues 22–33; that stretch reads VYVDGPREGMKV. Residues N193, M222, Y251, H287, 307–309, 348–351, and E387 each bind substrate; these read SRG and DGLR. H391 contacts Zn(2+). Y414 is a substrate binding site. H455 provides a ligand contact to Zn(2+). [4Fe-4S] cluster-binding residues include C535, C538, and C543.

The protein belongs to the ThiC family. The cofactor is [4Fe-4S] cluster.

It catalyses the reaction 5-amino-1-(5-phospho-beta-D-ribosyl)imidazole + S-adenosyl-L-methionine = 4-amino-2-methyl-5-(phosphooxymethyl)pyrimidine + CO + 5'-deoxyadenosine + formate + L-methionine + 3 H(+). It participates in cofactor biosynthesis; thiamine diphosphate biosynthesis. Catalyzes the synthesis of the hydroxymethylpyrimidine phosphate (HMP-P) moiety of thiamine from aminoimidazole ribotide (AIR) in a radical S-adenosyl-L-methionine (SAM)-dependent reaction. The chain is Phosphomethylpyrimidine synthase from Bacillus cereus (strain G9842).